The primary structure comprises 317 residues: Beta-ketoacyl-[acyl-carrier-protein] synthase III (317 aa).

Catalysis depends on residues Cys-112 and His-244. An ACP-binding region spans residues 245–249 (QANLR). Asn-274 is an active-site residue.

This sequence belongs to the thiolase-like superfamily. FabH family. Homodimer.

Its subcellular location is the cytoplasm. It carries out the reaction malonyl-[ACP] + acetyl-CoA + H(+) = 3-oxobutanoyl-[ACP] + CO2 + CoA. It participates in lipid metabolism; fatty acid biosynthesis. In terms of biological role, catalyzes the condensation reaction of fatty acid synthesis by the addition to an acyl acceptor of two carbons from malonyl-ACP. Catalyzes the first condensation reaction which initiates fatty acid synthesis and may therefore play a role in governing the total rate of fatty acid production. Possesses both acetoacetyl-ACP synthase and acetyl transacylase activities. Its substrate specificity determines the biosynthesis of branched-chain and/or straight-chain of fatty acids. The sequence is that of Beta-ketoacyl-[acyl-carrier-protein] synthase III from Salmonella typhi.